The chain runs to 407 residues: 1-deoxy-D-xylulose 5-phosphate reductoisomerase (407 aa).

The NADPH site is built by Thr25, Gly26, Ser27, Ile28, Asn53, and Asn136. Lys137 contacts 1-deoxy-D-xylulose 5-phosphate. Glu138 serves as a coordination point for NADPH. Asp162 serves as a coordination point for Mn(2+). Positions 163, 164, 188, and 211 each coordinate 1-deoxy-D-xylulose 5-phosphate. A Mn(2+)-binding site is contributed by Glu164. Residue Gly217 coordinates NADPH. Residues Ser224, Asn229, Lys230, and Glu233 each coordinate 1-deoxy-D-xylulose 5-phosphate. Glu233 is a Mn(2+) binding site.

This sequence belongs to the DXR family. The cofactor is Mg(2+). Mn(2+) is required as a cofactor.

It catalyses the reaction 2-C-methyl-D-erythritol 4-phosphate + NADP(+) = 1-deoxy-D-xylulose 5-phosphate + NADPH + H(+). It functions in the pathway isoprenoid biosynthesis; isopentenyl diphosphate biosynthesis via DXP pathway; isopentenyl diphosphate from 1-deoxy-D-xylulose 5-phosphate: step 1/6. Functionally, catalyzes the NADPH-dependent rearrangement and reduction of 1-deoxy-D-xylulose-5-phosphate (DXP) to 2-C-methyl-D-erythritol 4-phosphate (MEP). This Rhodopseudomonas palustris (strain TIE-1) protein is 1-deoxy-D-xylulose 5-phosphate reductoisomerase.